The primary structure comprises 573 residues: Proline--tRNA ligase (573 aa).

This sequence belongs to the class-II aminoacyl-tRNA synthetase family. ProS type 1 subfamily. Homodimer.

The protein resides in the cytoplasm. It catalyses the reaction tRNA(Pro) + L-proline + ATP = L-prolyl-tRNA(Pro) + AMP + diphosphate. Functionally, catalyzes the attachment of proline to tRNA(Pro) in a two-step reaction: proline is first activated by ATP to form Pro-AMP and then transferred to the acceptor end of tRNA(Pro). As ProRS can inadvertently accommodate and process non-cognate amino acids such as alanine and cysteine, to avoid such errors it has two additional distinct editing activities against alanine. One activity is designated as 'pretransfer' editing and involves the tRNA(Pro)-independent hydrolysis of activated Ala-AMP. The other activity is designated 'posttransfer' editing and involves deacylation of mischarged Ala-tRNA(Pro). The misacylated Cys-tRNA(Pro) is not edited by ProRS. This chain is Proline--tRNA ligase, found in Methylobacillus flagellatus (strain ATCC 51484 / DSM 6875 / VKM B-1610 / KT).